Reading from the N-terminus, the 133-residue chain is Putative esterase TV1331 (133 aa).

Belongs to the thioesterase PaaI family.

This Thermoplasma volcanium (strain ATCC 51530 / DSM 4299 / JCM 9571 / NBRC 15438 / GSS1) protein is Putative esterase TV1331.